We begin with the raw amino-acid sequence, 146 residues long: Hemoglobin subunit beta (146 aa).

The region spanning 2–146 is the Globin domain; it reads FLTAEEKGLV…VASALAHRYH (145 aa). The residue at position 44 (Ser-44) is a Phosphoserine. N6-acetyllysine is present on Lys-59. His-63 serves as a coordination point for heme b. Lys-82 is modified (N6-acetyllysine). A heme b-binding site is contributed by His-92. The residue at position 93 (Cys-93) is an S-nitrosocysteine.

Belongs to the globin family. As to quaternary structure, heterotetramer of two alpha chains and two beta chains. Red blood cells.

In terms of biological role, involved in oxygen transport from the lung to the various peripheral tissues. The protein is Hemoglobin subunit beta (HBB) of Paguma larvata (Masked palm civet).